We begin with the raw amino-acid sequence, 373 residues long: tRNA-specific 2-thiouridylase MnmA (373 aa).

ATP-binding positions include glycine 12 to serine 19 and methionine 38. The interval asparagine 98–aspartate 100 is interaction with target base in tRNA. Catalysis depends on cysteine 103, which acts as the Nucleophile. Cysteine 103 and cysteine 200 form a disulfide bridge. ATP is bound at residue glycine 127. Positions lysine 150–glutamine 152 are interaction with tRNA. Catalysis depends on cysteine 200, which acts as the Cysteine persulfide intermediate. The segment at arginine 312 to tyrosine 313 is interaction with tRNA.

This sequence belongs to the MnmA/TRMU family.

It localises to the cytoplasm. It catalyses the reaction S-sulfanyl-L-cysteinyl-[protein] + uridine(34) in tRNA + AH2 + ATP = 2-thiouridine(34) in tRNA + L-cysteinyl-[protein] + A + AMP + diphosphate + H(+). Functionally, catalyzes the 2-thiolation of uridine at the wobble position (U34) of tRNA, leading to the formation of s(2)U34. In Streptococcus pyogenes serotype M3 (strain SSI-1), this protein is tRNA-specific 2-thiouridylase MnmA.